The sequence spans 185 residues: Ribosome maturation factor RimM (185 aa).

A PRC barrel domain is found at 92-168 (DDDTFYHADL…GRRVVVAEAF (77 aa)).

This sequence belongs to the RimM family. Binds ribosomal protein uS19.

It localises to the cytoplasm. Functionally, an accessory protein needed during the final step in the assembly of 30S ribosomal subunit, possibly for assembly of the head region. Essential for efficient processing of 16S rRNA. May be needed both before and after RbfA during the maturation of 16S rRNA. It has affinity for free ribosomal 30S subunits but not for 70S ribosomes. The chain is Ribosome maturation factor RimM from Xanthobacter autotrophicus (strain ATCC BAA-1158 / Py2).